Consider the following 347-residue polypeptide: Subtilase cytotoxin subunit A (347 aa).

An N-terminal signal peptide occupies residues 1 to 21 (MLKILWTYILFLLFISASARA). The region spanning 24–327 (PWYFDAIGLT…GRVLNAEKAI (304 aa)) is the Peptidase S8 domain. Residues Asp52, His89, and Ser272 each act as charge relay system in the active site. An intrachain disulfide couples Cys288 to Cys331. An A2 domain region spans residues 322-347 (NAEKAISMFCKKNYIPVRQGRMSEEL). The short motif at 344–347 (SEEL) is the Prevents secretion from ER element.

The protein belongs to the peptidase S8 family. In terms of assembly, forms a complex with SubB with the stoichiometry SubA1:SubB5 (called SubAB5).

The protein resides in the secreted. It is found in the host cytoplasm. Its subcellular location is the host cytosol. The protein localises to the host endoplasmic reticulum lumen. In terms of biological role, protease subunit of subtilase cytotoxin SubAB5. An endoprotease specific for host endoplasmic reticulum (ER) chaperone BiP/HSPA5, has no activity on human HSP70 or HSPA8. Cleaves between 'Leu-416' and 'Leu-417' of BiP/HSPA5 in the hinge between BiP's ATPase and protein-binding domains. This induces host ER stress response and eventual cell death. Culture supernatant of E.coli expressing both subA and subB are toxic for Vero cells (African green monkey kidney cell line), Chinese hamster ovary cells and Hct-8 cells (human colonic epithelial cell line); the subunits are not toxic individually. Purified SubAB5 is highly toxic, &lt;0.1 pg is able to kill at least 50% of 30'000 Vero cells in a microtiter plate assay after 3 days; no cytotoxicity is seen at 24 hours. Preabsorption with cells expressing a ganglioside GM2 mimic reduced cytotoxicity of SubAB5 by 93% in the Vero cytotoxicity assay. Intraperitoneal injection of 200 ng of purified SubAB5 kills mice; the higher the dose the faster the mice die. Animals injected intraperitoneally with purified SubAB5 have microvascular thrombi in the brain and other organs, including the renal tubules and glomeruli. Injection induces an unfolded response in mice. Mice fed E.coli cells expressing cloned SubAB5 experience drastic weight loss and appear ill and lethargic. Protein synthesis in Vero cells is transiently inhibited by SubAB5; both subunits are required for this effect. Inhibition of protein synthesis is prevented by brefeldin A; cells are arrested in the G1 phase. SubAB5 at 100 ng/ml induced caspase-dependent apoptosis in Vero cells through mitochondrial membrane damage. This Escherichia coli protein is Subtilase cytotoxin subunit A.